Here is a 229-residue protein sequence, read N- to C-terminus: Urease accessory protein UreF (229 aa).

Belongs to the UreF family. In terms of assembly, ureD, UreF and UreG form a complex that acts as a GTP-hydrolysis-dependent molecular chaperone, activating the urease apoprotein by helping to assemble the nickel containing metallocenter of UreC. The UreE protein probably delivers the nickel.

Its subcellular location is the cytoplasm. Its function is as follows. Required for maturation of urease via the functional incorporation of the urease nickel metallocenter. The sequence is that of Urease accessory protein UreF from Staphylococcus saprophyticus subsp. saprophyticus (strain ATCC 15305 / DSM 20229 / NCIMB 8711 / NCTC 7292 / S-41).